The sequence spans 391 residues: Homocitrate synthase AksA (391 aa).

The Pyruvate carboxyltransferase domain occupies 20-271; it reads ITIYDTTLRD…DLGFNIGVLY (252 aa).

It belongs to the alpha-IPM synthase/homocitrate synthase family.

It carries out the reaction acetyl-CoA + 2-oxoglutarate + H2O = (2R)-homocitrate + CoA + H(+). It catalyses the reaction 2-oxoadipate + acetyl-CoA + H2O = (R)-dihomocitrate + CoA + H(+). The enzyme catalyses 2-oxoheptanedioate + acetyl-CoA + H2O = (R)-trihomocitrate + CoA + H(+). The protein operates within organic acid metabolism; 2-oxosuberate biosynthesis. Catalyzes the condensation of alpha-ketoglutarate and acetyl-CoA to form (R)-homocitrate. Can also catalyze the condensation of alpha-ketoadipate with acetyl-CoA to form (R)-homo(2)citrate, and the condensation of alpha-ketopimelate with acetyl-CoA to form (R)-homo(3)citrate. These reactions are part of the biosynthesis pathway of coenzyme B and biotin. The chain is Homocitrate synthase AksA (aksA) from Methanothermobacter thermautotrophicus (strain ATCC 29096 / DSM 1053 / JCM 10044 / NBRC 100330 / Delta H) (Methanobacterium thermoautotrophicum).